A 129-amino-acid polypeptide reads, in one-letter code: Small ribosomal subunit protein uS11 (129 aa).

Belongs to the universal ribosomal protein uS11 family. In terms of assembly, part of the 30S ribosomal subunit.

In terms of biological role, located on the platform of the 30S subunit. This Methanocaldococcus jannaschii (strain ATCC 43067 / DSM 2661 / JAL-1 / JCM 10045 / NBRC 100440) (Methanococcus jannaschii) protein is Small ribosomal subunit protein uS11.